Consider the following 291-residue polypeptide: tRNA-cytidine(32) 2-sulfurtransferase (291 aa).

Positions 36–41 match the PP-loop motif motif; sequence SGGKDS. Residues Cys-111, Cys-114, and Cys-202 each coordinate [4Fe-4S] cluster. The tract at residues 259 to 291 is disordered; the sequence is DPWLDAEDEEAEDCGEPSAGDGVVSLGGARGGR. Acidic residues predominate over residues 262–273; it reads LDAEDEEAEDCG.

This sequence belongs to the TtcA family. In terms of assembly, homodimer. The cofactor is Mg(2+). [4Fe-4S] cluster is required as a cofactor.

The protein localises to the cytoplasm. It carries out the reaction cytidine(32) in tRNA + S-sulfanyl-L-cysteinyl-[cysteine desulfurase] + AH2 + ATP = 2-thiocytidine(32) in tRNA + L-cysteinyl-[cysteine desulfurase] + A + AMP + diphosphate + H(+). Its pathway is tRNA modification. Catalyzes the ATP-dependent 2-thiolation of cytidine in position 32 of tRNA, to form 2-thiocytidine (s(2)C32). The sulfur atoms are provided by the cysteine/cysteine desulfurase (IscS) system. This Anaeromyxobacter sp. (strain K) protein is tRNA-cytidine(32) 2-sulfurtransferase.